The following is a 269-amino-acid chain: Shikimate dehydrogenase (NADP(+)) (269 aa).

Residues 14–16 (SKS) and Thr61 contribute to the shikimate site. Lys65 (proton acceptor) is an active-site residue. Position 77 (Glu77) interacts with NADP(+). 2 residues coordinate shikimate: Asn86 and Asp102. Residues 126 to 130 (GAGGA), 150 to 155 (NRTYEK), and Met213 each bind NADP(+). Residue Tyr215 participates in shikimate binding. Residue Gly237 participates in NADP(+) binding.

The protein belongs to the shikimate dehydrogenase family. As to quaternary structure, homodimer.

The enzyme catalyses shikimate + NADP(+) = 3-dehydroshikimate + NADPH + H(+). The protein operates within metabolic intermediate biosynthesis; chorismate biosynthesis; chorismate from D-erythrose 4-phosphate and phosphoenolpyruvate: step 4/7. Functionally, involved in the biosynthesis of the chorismate, which leads to the biosynthesis of aromatic amino acids. Catalyzes the reversible NADPH linked reduction of 3-dehydroshikimate (DHSA) to yield shikimate (SA). This is Shikimate dehydrogenase (NADP(+)) from Aliivibrio fischeri (strain ATCC 700601 / ES114) (Vibrio fischeri).